We begin with the raw amino-acid sequence, 1534 residues long: DNA-directed RNA polymerase subunit beta'' (1534 aa).

Residues Cys-220, Cys-296, Cys-303, and Cys-306 each coordinate Zn(2+). 2 stretches are compositionally biased toward basic and acidic residues: residues Arg-644–Glu-668 and Pro-678–Glu-688. 2 disordered regions span residues Arg-644–Tyr-698 and Tyr-719–Gly-800. 2 stretches are compositionally biased toward acidic residues: residues Gly-744 to Asp-762 and Thr-770 to Ser-789.

The protein belongs to the RNA polymerase beta' chain family. RpoC2 subfamily. As to quaternary structure, in plastids the minimal PEP RNA polymerase catalytic core is composed of four subunits: alpha, beta, beta', and beta''. When a (nuclear-encoded) sigma factor is associated with the core the holoenzyme is formed, which can initiate transcription. Requires Zn(2+) as cofactor.

It localises to the plastid. Its subcellular location is the chloroplast. The enzyme catalyses RNA(n) + a ribonucleoside 5'-triphosphate = RNA(n+1) + diphosphate. In terms of biological role, DNA-dependent RNA polymerase catalyzes the transcription of DNA into RNA using the four ribonucleoside triphosphates as substrates. This Saccharum hybrid (Sugarcane) protein is DNA-directed RNA polymerase subunit beta''.